A 289-amino-acid polypeptide reads, in one-letter code: Pyridoxal kinase PdxY (289 aa).

Substrate contacts are provided by residues Ser9 and 44–45; that span reads TQ. Residues Asp112, Ala144, Glu149, Lys183, and 210–213 each bind ATP; that span reads RPLV. Asp225 contacts substrate.

This sequence belongs to the pyridoxine kinase family. PdxY subfamily. Homodimer. The cofactor is Mg(2+).

It catalyses the reaction pyridoxal + ATP = pyridoxal 5'-phosphate + ADP + H(+). Its pathway is cofactor metabolism; pyridoxal 5'-phosphate salvage; pyridoxal 5'-phosphate from pyridoxal: step 1/1. Pyridoxal kinase involved in the salvage pathway of pyridoxal 5'-phosphate (PLP). Catalyzes the phosphorylation of pyridoxal to PLP. The chain is Pyridoxal kinase PdxY from Proteus mirabilis.